Consider the following 209-residue polypeptide: Thymidylate kinase (209 aa).

11–18 (GPDGAGKT) contacts ATP.

This sequence belongs to the thymidylate kinase family.

It catalyses the reaction dTMP + ATP = dTDP + ADP. Its function is as follows. Phosphorylation of dTMP to form dTDP in both de novo and salvage pathways of dTTP synthesis. This Streptococcus thermophilus (strain ATCC BAA-250 / LMG 18311) protein is Thymidylate kinase.